The following is a 360-amino-acid chain: Phospho-N-acetylmuramoyl-pentapeptide-transferase (360 aa).

Transmembrane regions (helical) follow at residues 21-41 (YITF…LWIG), 73-93 (TMGG…WADL), 98-118 (VWFV…DDYW), 132-152 (WKYF…YAVG), 168-188 (FMPQ…VGTS), 199-219 (GLAI…AWAT), 236-256 (AGEL…FLWY), 263-283 (VFMG…IAVL), 288-308 (LLLV…ILQV), and 338-358 (VIVR…VTLK).

The protein belongs to the glycosyltransferase 4 family. MraY subfamily. Mg(2+) is required as a cofactor.

Its subcellular location is the cell inner membrane. The catalysed reaction is UDP-N-acetyl-alpha-D-muramoyl-L-alanyl-gamma-D-glutamyl-meso-2,6-diaminopimeloyl-D-alanyl-D-alanine + di-trans,octa-cis-undecaprenyl phosphate = di-trans,octa-cis-undecaprenyl diphospho-N-acetyl-alpha-D-muramoyl-L-alanyl-D-glutamyl-meso-2,6-diaminopimeloyl-D-alanyl-D-alanine + UMP. Its pathway is cell wall biogenesis; peptidoglycan biosynthesis. Functionally, catalyzes the initial step of the lipid cycle reactions in the biosynthesis of the cell wall peptidoglycan: transfers peptidoglycan precursor phospho-MurNAc-pentapeptide from UDP-MurNAc-pentapeptide onto the lipid carrier undecaprenyl phosphate, yielding undecaprenyl-pyrophosphoryl-MurNAc-pentapeptide, known as lipid I. The protein is Phospho-N-acetylmuramoyl-pentapeptide-transferase of Actinobacillus pleuropneumoniae serotype 3 (strain JL03).